Reading from the N-terminus, the 429-residue chain is UDP-N-acetylglucosamine 1-carboxyvinyltransferase (429 aa).

A phosphoenolpyruvate-binding site is contributed by 22 to 23 (KN). R96 contributes to the UDP-N-acetyl-alpha-D-glucosamine binding site. C120 acts as the Proton donor in catalysis. At C120 the chain carries 2-(S-cysteinyl)pyruvic acid O-phosphothioketal. UDP-N-acetyl-alpha-D-glucosamine is bound by residues 125–129 (RPVDL), D310, and I332.

Belongs to the EPSP synthase family. MurA subfamily.

It is found in the cytoplasm. The catalysed reaction is phosphoenolpyruvate + UDP-N-acetyl-alpha-D-glucosamine = UDP-N-acetyl-3-O-(1-carboxyvinyl)-alpha-D-glucosamine + phosphate. It functions in the pathway cell wall biogenesis; peptidoglycan biosynthesis. Cell wall formation. Adds enolpyruvyl to UDP-N-acetylglucosamine. This Caulobacter vibrioides (strain ATCC 19089 / CIP 103742 / CB 15) (Caulobacter crescentus) protein is UDP-N-acetylglucosamine 1-carboxyvinyltransferase.